We begin with the raw amino-acid sequence, 102 residues long: ATP-dependent Clp protease adapter protein ClpS (102 aa).

The protein belongs to the ClpS family. In terms of assembly, binds to the N-terminal domain of the chaperone ClpA.

Functionally, involved in the modulation of the specificity of the ClpAP-mediated ATP-dependent protein degradation. This chain is ATP-dependent Clp protease adapter protein ClpS, found in Desulfotalea psychrophila (strain LSv54 / DSM 12343).